Consider the following 326-residue polypeptide: tRNA(Ile)-lysidine synthase (326 aa).

An ATP-binding site is contributed by 23 to 28 (SGGVDS).

It belongs to the tRNA(Ile)-lysidine synthase family.

It is found in the cytoplasm. It carries out the reaction cytidine(34) in tRNA(Ile2) + L-lysine + ATP = lysidine(34) in tRNA(Ile2) + AMP + diphosphate + H(+). Its function is as follows. Ligates lysine onto the cytidine present at position 34 of the AUA codon-specific tRNA(Ile) that contains the anticodon CAU, in an ATP-dependent manner. Cytidine is converted to lysidine, thus changing the amino acid specificity of the tRNA from methionine to isoleucine. This chain is tRNA(Ile)-lysidine synthase, found in Wolinella succinogenes (strain ATCC 29543 / DSM 1740 / CCUG 13145 / JCM 31913 / LMG 7466 / NCTC 11488 / FDC 602W) (Vibrio succinogenes).